Consider the following 232-residue polypeptide: DASH complex subunit DUO1 (232 aa).

Disordered regions lie at residues 1–44 (MADE…GGMR) and 133–232 (ERRR…RGAK). Residues 128–171 (ELEAEERRRQEEVERRAAEAERRREEARRKAEEEERRRAAAAAA) are a coiled coil. Residues 133–165 (ERRRQEEVERRAAEAERRREEARRKAEEEERRR) show a composition bias toward basic and acidic residues. Low complexity-rich tracts occupy residues 167-183 (AAAA…VGRG) and 191-213 (GSGL…TTSG).

This sequence belongs to the DASH complex DUO1 family. Component of the DASH complex consisting of ASK1, DAD1, DAD2, DAD3, DAD4, DAM1, DUO1, HSK3, SPC19 and SPC34, with a stoichiometry of one copy of each subunit per complex. Multiple DASH complexes oligomerize to form a ring that encircles spindle microtubules and organizes the rod-like NDC80 complexes of the outer kinetochore. DASH complex oligomerization strengthens microtubule attachments. On cytoplasmic microtubules, DASH complexes appear to form patches instead of rings.

It is found in the nucleus. Its subcellular location is the cytoplasm. The protein resides in the cytoskeleton. It localises to the spindle pole. The protein localises to the chromosome. It is found in the centromere. Its subcellular location is the kinetochore. Its function is as follows. Component of the DASH complex that connects microtubules with kinetochores and couples microtubule depolymerisation to chromosome movement; it is involved in retrieving kinetochores to the spindle poles before their re-orientation on the spindle in early mitosis and allows microtubule depolymerization to pull chromosomes apart and resist detachment during anaphase. Kinetochores, consisting of a centromere-associated inner segment and a microtubule-contacting outer segment, play a crucial role in chromosome segregation by mediating the physical connection between centromeric DNA and microtubules. Kinetochores also serve as an input point for the spindle assembly checkpoint, which delays anaphase until all chromosomes have bioriented on the mitotic spindle. This chain is DASH complex subunit DUO1, found in Chaetomium thermophilum (strain DSM 1495 / CBS 144.50 / IMI 039719) (Thermochaetoides thermophila).